Consider the following 143-residue polypeptide: Nucleoside diphosphate kinase (143 aa).

The ATP site is built by Lys-11, Phe-59, Arg-87, Thr-93, Arg-104, and Asn-114. His-117 (pros-phosphohistidine intermediate) is an active-site residue.

This sequence belongs to the NDK family. In terms of assembly, homotetramer. It depends on Mg(2+) as a cofactor.

Its subcellular location is the cytoplasm. The enzyme catalyses a 2'-deoxyribonucleoside 5'-diphosphate + ATP = a 2'-deoxyribonucleoside 5'-triphosphate + ADP. It carries out the reaction a ribonucleoside 5'-diphosphate + ATP = a ribonucleoside 5'-triphosphate + ADP. In terms of biological role, major role in the synthesis of nucleoside triphosphates other than ATP. The ATP gamma phosphate is transferred to the NDP beta phosphate via a ping-pong mechanism, using a phosphorylated active-site intermediate. This is Nucleoside diphosphate kinase from Cronobacter sakazakii (strain ATCC BAA-894) (Enterobacter sakazakii).